The primary structure comprises 509 residues: DNA primase DnaG (509 aa).

Residues 167-253 (DAIVVVEGRA…CVEDLARHEV (87 aa)) enclose the Toprim domain. Mg(2+)-binding residues include Glu-173, Asp-215, and Asp-217. The disordered stretch occupies residues 267–411 (KQAASDDADP…ASTDEQPKTL (145 aa)). Composition is skewed to low complexity over residues 313-331 (PVSS…ETAA) and 383-402 (ESTA…AAGA).

This sequence belongs to the archaeal DnaG primase family. In terms of assembly, forms a ternary complex with MCM helicase and DNA. Requires Mg(2+) as cofactor.

It catalyses the reaction ssDNA + n NTP = ssDNA/pppN(pN)n-1 hybrid + (n-1) diphosphate.. Functionally, RNA polymerase that catalyzes the synthesis of short RNA molecules used as primers for DNA polymerase during DNA replication. In Natronomonas pharaonis (strain ATCC 35678 / DSM 2160 / CIP 103997 / JCM 8858 / NBRC 14720 / NCIMB 2260 / Gabara) (Halobacterium pharaonis), this protein is DNA primase DnaG.